Consider the following 293-residue polypeptide: Putative ABC transporter ATP-binding protein AF_0731 (293 aa).

The ABC transporter domain occupies 2-236 (IEAVDLHFCY…RKLGIRSFSL (235 aa)). 34–41 (GRNGAGKT) is an ATP binding site.

The protein belongs to the ABC transporter superfamily.

The protein resides in the cell membrane. Functionally, probably part of an ABC transporter complex. Responsible for energy coupling to the transport system. The polypeptide is Putative ABC transporter ATP-binding protein AF_0731 (Archaeoglobus fulgidus (strain ATCC 49558 / DSM 4304 / JCM 9628 / NBRC 100126 / VC-16)).